The chain runs to 277 residues: Carbonyl reductase [NADPH] 1 (277 aa).

Serine 2 carries the post-translational modification N-acetylserine. 2 positions are modified to phosphoserine: serine 2 and serine 30. NADP(+) is bound by residues 10–34, 63–64, and asparagine 90; these read VTGA…GDVV and DI. Glutathione contacts are provided by residues 95–97 and glutamine 106; that span reads FKT. Serine 140 provides a ligand contact to substrate. Residue 193-194 coordinates glutathione; it reads AY. The Proton acceptor role is filled by tyrosine 194. NADP(+) contacts are provided by residues 194–198 and 231–233; these read YGVTK and VRT. Residue lysine 239 is modified to N6-1-carboxyethyl lysine.

It belongs to the short-chain dehydrogenases/reductases (SDR) family. Monomer.

Its subcellular location is the cytoplasm. It catalyses the reaction a secondary alcohol + NADP(+) = a ketone + NADPH + H(+). The catalysed reaction is prostaglandin F2alpha + NADP(+) = prostaglandin E2 + NADPH + H(+). It carries out the reaction prostaglandin E1 + NADP(+) = 15-oxoprostaglandin E1 + NADPH + H(+). The enzyme catalyses menadione + NADPH + H(+) = menadiol + NADP(+). It catalyses the reaction prostaglandin D2 + NADP(+) = 15-oxoprostaglandin D2 + NADPH + H(+). The catalysed reaction is prostaglandin E2 + NADP(+) = 15-oxoprostaglandin E2 + NADPH + H(+). It carries out the reaction prostaglandin F2alpha + NADP(+) = 15-oxoprostaglandin F2alpha + NADPH + H(+). The enzyme catalyses daunorubicin + NADPH + H(+) = 13-dihydrodaunorubicin + NADP(+). It catalyses the reaction S-nitrosoglutathione + NADPH + H(+) = S-(hydroxysulfenamide)glutathione + NADP(+). The catalysed reaction is a primary alcohol + NADP(+) = an aldehyde + NADPH + H(+). It carries out the reaction cortisol + NADPH + H(+) = 20beta-dihydrocortisol + NADP(+). The enzyme catalyses corticosterone + NADPH + H(+) = 20beta-dihydrocorticosterone + NADP(+). In terms of biological role, NADPH-dependent reductase with broad substrate specificity. Catalyzes the reduction of a wide variety of carbonyl compounds including quinones, prostaglandins, menadione, plus various xenobiotics. Catalyzes the reduction of the antitumor anthracyclines doxorubicin and daunorubicin to the cardiotoxic compounds doxorubicinol and daunorubicinol. Can convert prostaglandin E to prostaglandin F2-alpha. Can bind glutathione, which explains its higher affinity for glutathione-conjugated substrates. Catalyzes the reduction of S-nitrosoglutathione. In addition, participates in the glucocorticoid metabolism by catalyzing the NADPH-dependent cortisol/corticosterone into 20beta-dihydrocortisol (20b-DHF) or 20beta-corticosterone (20b-DHB), which are weak agonists of NR3C1 and NR3C2 in adipose tissue. In Bos taurus (Bovine), this protein is Carbonyl reductase [NADPH] 1.